The primary structure comprises 448 residues: N-succinylarginine dihydrolase (448 aa).

Substrate-binding positions include 19–28 (AGLSYGNVAS), asparagine 110, and 137–138 (HR). Glutamate 174 is an active-site residue. Arginine 214 provides a ligand contact to substrate. Histidine 250 is an active-site residue. Aspartate 252 and asparagine 364 together coordinate substrate. Cysteine 370 functions as the Nucleophile in the catalytic mechanism.

It belongs to the succinylarginine dihydrolase family. Homodimer.

It carries out the reaction N(2)-succinyl-L-arginine + 2 H2O + 2 H(+) = N(2)-succinyl-L-ornithine + 2 NH4(+) + CO2. Its pathway is amino-acid degradation; L-arginine degradation via AST pathway; L-glutamate and succinate from L-arginine: step 2/5. Catalyzes the hydrolysis of N(2)-succinylarginine into N(2)-succinylornithine, ammonia and CO(2). The sequence is that of N-succinylarginine dihydrolase from Pseudoalteromonas translucida (strain TAC 125).